The sequence spans 1192 residues: MASQVLVYPPYVYQTQSSAFCSVKKLKVEPSGCVFQERTYPQIHVNGRNFGNSHPSTKGSAFQTKIPFTKPRGHSFSLQAGAIVVKDTAGATKVLAAQAQQAGVEAPRAVVWRNRLHFLEGPQRCGLKRKSEELENHSGAMQIVDELSILPAMLQTNMGNPVTVVTATTGSKQNCTSGEGDYQLVQHEVLCSMKNTYEVLDFLGRGTFGQVVKCWKRGTNEIVAIKILKNHPSYARQGQIEVSILARLSTENADEYNFVRAYECFQHRNHTCLVFEMLEQNLYDFLKQNKFSPLPLKVIRPVLQQVATALKKLKSLGLIHADLKPENIMLVDPVRQPYRVKVIDFGSASHVSKTVCSTYLQSRYYRAPEIILGLPFCEAIDMWSLGCVIAELFLGWPLYPGALEYDQIRYISQTQGLPGEQLLNVGTKSTRFFCRETDMSHSGWRLKTLEEHEAETGMKSKEARKYIFNSLDDIVHVNTVMDLEGGDLLAEKADRREFVNLLKKMLLIDADLRITPIETLNHPFVNMKHLLDFPHSNHVKSCFHIMDICKSPSSCETNNHSKMSLLRPVASNGTAALAANFTKVGTLRSQALTTSAHSVVHHGIPLQAGTAQFGCGDAFHQTLIICPPAIQGIPAAHGKPTSYSIRVDNTVPLVTQAPAVQPLQIRPGVLSQQTWSGRTQQMLIPAWQQVTPMAPAAATLTSEGMAGSQRLGDWGKMIPHSNHYNSVMPPPLLTNQITLSAPQPISVGIAHVVWPQPATTKKNKLCQNRSNSLQNTNIPHSAFISPKIISGKEVEEVSCVDTQDNHTSEGEAGTCREASVRQDSSVSDKQRQTIIIADSPSPAVSVITISSDSDDEETSPRPSLRECKGSLDCEACQSTLNIDRMCSLSSPDSTLSTSSSGQSSPSPCKRPNSMSDDEQESGCETVDGSPTSDSSGHDSPFAENSFVEDAHQNTELGTCAGPEAKPAVGTAVEPPVGRESGLSVDEHMANTDSTCQPLRKGQPAPGKLHQPPALGARQQKPAAAFPQQHLNLSQVQHFGTGHQEWNGNFGHRRQQAYIPTSVTSNPFTLSHGSPNHTAVHAHLAGSTHLGGQPTLLPYPSSASLSSAAPVAHLLASPCTSRPMLQHPTYNISHPSGIVHQVPVGINPRLLPSPTIHQTQYKPIFPPHSYIAASPAYTGFPLSPTKLSQYPYM.

Lys-27 participates in a covalent cross-link: Glycyl lysine isopeptide (Lys-Gly) (interchain with G-Cter in SUMO); alternate. Residue Lys-27 forms a Glycyl lysine isopeptide (Lys-Gly) (interchain with G-Cter in SUMO2); alternate linkage. The Protein kinase domain occupies 197–525 (YEVLDFLGRG…PIETLNHPFV (329 aa)). ATP-binding positions include 203 to 211 (LGRGTFGQV) and Lys-226. The active-site Proton acceptor is Asp-322. A Phosphotyrosine modification is found at Tyr-359. The segment at 767-921 (QNRSNSLQNT…NSMSDDEQES (155 aa)) is interaction with AR. The interaction with FAS stretch occupies residues 775 to 868 (NTNIPHSAFI…SPRPSLRECK (94 aa)). Residues 799–829 (CVDTQDNHTSEGEAGTCREASVRQDSSVSDK) are disordered. Residues 832-988 (QTIIIADSPS…ESGLSVDEHM (157 aa)) are required for localization to nuclear speckles. An SUMO interaction motifs (SIM); required for nuclear localization and kinase activity region spans residues 843-895 (AVSVITISSDSDDEETSPRPSLRECKGSLDCEACQSTLNIDRMCSLSSPDSTL). The tract at residues 847–857 (ITISSDSDDEE) is interaction with UBL1. The segment covering 889–906 (SSPDSTLSTSSSGQSSPS) has biased composition (low complexity). Disordered regions lie at residues 889-943 (SSPD…PFAE) and 956-1023 (LGTC…KPAA). Lys-1185 is covalently cross-linked (Glycyl lysine isopeptide (Lys-Gly) (interchain with G-Cter in SUMO)).

This sequence belongs to the protein kinase superfamily. CMGC Ser/Thr protein kinase family. HIPK subfamily. Interacts with UBL1/SUMO-1. Interacts with and stabilizes ligand-bound androgen receptor (AR). Interacts with Nkx1-2. Interacts with FAS and DAXX. Probably part of a complex consisting of HIPK3, FAS and FADD. Binds to NR5A1/SF1, SPEN/MINT and RUNX2. In terms of processing, autophosphorylated, but autophosphorylation is not required for catalytic activity. Post-translationally, may be sumoylated. Heart, skeletal muscle, spleen, testis and lung.

It localises to the cytoplasm. It is found in the nucleus. The catalysed reaction is L-seryl-[protein] + ATP = O-phospho-L-seryl-[protein] + ADP + H(+). It carries out the reaction L-threonyl-[protein] + ATP = O-phospho-L-threonyl-[protein] + ADP + H(+). Its function is as follows. Serine/threonine-protein kinase involved in transcription regulation, apoptosis and steroidogenic gene expression. Phosphorylates JUN and RUNX2. Seems to negatively regulate apoptosis by promoting FADD phosphorylation. Enhances androgen receptor-mediated transcription. May act as a transcriptional corepressor for NK homeodomain transcription factors. The phosphorylation of NR5A1 activates SF1 leading to increased steroidogenic gene expression upon cAMP signaling pathway stimulation. In osteoblasts, supports transcription activation: phosphorylates RUNX2 that synergizes with SPEN/MINT to enhance FGFR2-mediated activation of the osteocalcin FGF-responsive element (OCFRE). The sequence is that of Homeodomain-interacting protein kinase 3 (Hipk3) from Mus musculus (Mouse).